Consider the following 465-residue polypeptide: Glutamate--tRNA ligase (465 aa).

Residues 8-18 (PSPTGDLHIGG) carry the 'HIGH' region motif. The 'KMSKS' region motif lies at 235 to 239 (RLSKR). ATP is bound at residue lysine 238.

Belongs to the class-I aminoacyl-tRNA synthetase family. Glutamate--tRNA ligase type 1 subfamily. In terms of assembly, monomer.

The protein resides in the cytoplasm. It carries out the reaction tRNA(Glu) + L-glutamate + ATP = L-glutamyl-tRNA(Glu) + AMP + diphosphate. Its function is as follows. Catalyzes the attachment of glutamate to tRNA(Glu) in a two-step reaction: glutamate is first activated by ATP to form Glu-AMP and then transferred to the acceptor end of tRNA(Glu). The sequence is that of Glutamate--tRNA ligase from Dichelobacter nodosus (strain VCS1703A).